Here is a 316-residue protein sequence, read N- to C-terminus: HPr kinase/phosphorylase (316 aa).

Catalysis depends on residues histidine 143 and lysine 164. 158–165 contacts ATP; sequence GEAGSGKS. Residue serine 165 participates in Mg(2+) binding. Aspartate 182 acts as the Proton acceptor; for phosphorylation activity. Proton donor; for dephosphorylation activity in catalysis. An important for the catalytic mechanism of both phosphorylation and dephosphorylation region spans residues 206–215; that stretch reads LEVRGLGVLN. Glutamate 207 contributes to the Mg(2+) binding site. The active site involves arginine 251. Residues 272-277 are important for the catalytic mechanism of dephosphorylation; that stretch reads PVMPGR.

Belongs to the HPrK/P family. As to quaternary structure, homohexamer. Mg(2+) serves as cofactor.

The enzyme catalyses [HPr protein]-L-serine + ATP = [HPr protein]-O-phospho-L-serine + ADP + H(+). The catalysed reaction is [HPr protein]-O-phospho-L-serine + phosphate + H(+) = [HPr protein]-L-serine + diphosphate. Catalyzes the ATP- as well as the pyrophosphate-dependent phosphorylation of a specific serine residue in HPr, a phosphocarrier protein of the phosphoenolpyruvate-dependent sugar phosphotransferase system (PTS). HprK/P also catalyzes the pyrophosphate-producing, inorganic phosphate-dependent dephosphorylation (phosphorolysis) of seryl-phosphorylated HPr (P-Ser-HPr). This chain is HPr kinase/phosphorylase, found in Stenotrophomonas maltophilia (strain K279a).